Consider the following 365-residue polypeptide: Synapse-associated protein 1 (365 aa).

The interval 1-65 (MFGGLSSWLG…QPPTEDPQFL (65 aa)) is disordered. Positions 52-62 (EQQQQPPTEDP) are enriched in low complexity. Residues 172-224 (VQFNFDFDQMYPVALVMLQEDELLSKMRFALVPKLVKEEVFWRNYFYRISLIK) enclose the BSD domain. Residues 237 to 259 (QASGKEEKSSNRDDNLPLTEAVR) are disordered. Over residues 240 to 251 (GKEEKSSNRDDN) the composition is skewed to basic and acidic residues. Position 262 is a phosphothreonine (Thr262). 3 positions are modified to phosphoserine: Ser283, Ser298, and Ser327. A disordered region spans residues 344 to 365 (VAESEKRDENWDKEIEKMLQES). Positions 346-365 (ESEKRDENWDKEIEKMLQES) are enriched in basic and acidic residues.

In terms of assembly, interacts (via phosphorylated form and BSD domain) with AKT1; this interaction is enhanced in a mTORC2-mediated manner in response to epidermal growth factor (EGF) stimulation and activates AKT1. Post-translationally, phosphorylated. Phosphorylation increases in a mTORC2-mediated manner in response to epidermal growth factor (EGF) stimulation. As to expression, expressed in the liver, kidney, skeletal muscle and in white and brown adipose tissues. Expressed in the cortex, cerebellum, thalamus, hippocampus, braistem, olfactory bulb, spinal cord and striatum of the brain. Expressed in most neuropil regions containing glutamatergic synaptic terminals. Expressed in the CA1, CA2 and CA3 perikarya of the hippocampus. Expressed in neurons and Purkinje cells (at the protein level).

Its subcellular location is the cytoplasm. It localises to the perinuclear region. It is found in the golgi apparatus. The protein resides in the perikaryon. The protein localises to the cell projection. Its subcellular location is the axon. It localises to the dendrite. It is found in the growth cone. The protein resides in the presynaptic cell membrane. The protein localises to the postsynaptic cell membrane. Its subcellular location is the membrane. In terms of biological role, plays a role in adipocyte differentiation by promoting mTORC2-mediated phosphorylation of AKT1 at 'Ser-473' after growth factor stimulation. This Mus musculus (Mouse) protein is Synapse-associated protein 1.